The chain runs to 200 residues: dITP/XTP pyrophosphatase (200 aa).

Residue 8–13 (TGNQGK) coordinates substrate. D69 functions as the Proton acceptor in the catalytic mechanism. A Mg(2+)-binding site is contributed by D69. Residues S70, 154 to 157 (FGYD), K177, and 182 to 183 (HR) contribute to the substrate site.

This sequence belongs to the HAM1 NTPase family. In terms of assembly, homodimer. Mg(2+) serves as cofactor.

The enzyme catalyses XTP + H2O = XMP + diphosphate + H(+). It catalyses the reaction dITP + H2O = dIMP + diphosphate + H(+). It carries out the reaction ITP + H2O = IMP + diphosphate + H(+). Functionally, pyrophosphatase that catalyzes the hydrolysis of nucleoside triphosphates to their monophosphate derivatives, with a high preference for the non-canonical purine nucleotides XTP (xanthosine triphosphate), dITP (deoxyinosine triphosphate) and ITP. Seems to function as a house-cleaning enzyme that removes non-canonical purine nucleotides from the nucleotide pool, thus preventing their incorporation into DNA/RNA and avoiding chromosomal lesions. The sequence is that of dITP/XTP pyrophosphatase from Vibrio cholerae serotype O1 (strain ATCC 39315 / El Tor Inaba N16961).